Here is a 301-residue protein sequence, read N- to C-terminus: Peptidyl-prolyl isomerase CWC27 (301 aa).

A PPIase cyclophilin-type domain is found at 9-159 (TTAKCILYTT…YPAVLKDVEI (151 aa)). The tract at residues 251–280 (TELHDNVDEATTKETESQENIKEEPMDKRE) is disordered.

Belongs to the cyclophilin-type PPIase family. CWC27 subfamily. Belongs to the CWC complex (or CEF1-associated complex), a spliceosome subcomplex composed of the U2, U5 and U6 snRNAs and at least BUD13, BUD31, BRR2, CDC40, CEF1, CLF1, CUS1, CWC2, CWC15, CWC21, CWC22, CWC23, CWC24, CWC25, CWC27, ECM2, HSH155, IST3, ISY1, LEA1, MSL1, NTC20, PRP8, PRP9, PRP11, PRP19, PRP21, PRP22, PRP45, PRP46, SLU7, SMB1, SMD1, SMD2, SMD3, SMX2, SMX3, SNT309, SNU114, SPP2, SYF1, SYF2, RSE1 and YJU2.

It localises to the cytoplasm. The protein localises to the nucleus. It carries out the reaction [protein]-peptidylproline (omega=180) = [protein]-peptidylproline (omega=0). In terms of biological role, PPIases accelerate the folding of proteins. Catalyzes the cis-trans isomerization of proline imidic peptide bonds in oligopeptides. Involved in pre-mRNA splicing. The protein is Peptidyl-prolyl isomerase CWC27 (CWC27) of Saccharomyces cerevisiae (strain ATCC 204508 / S288c) (Baker's yeast).